We begin with the raw amino-acid sequence, 602 residues long: Arp2/3 complex-activating protein rickA (602 aa).

3 disordered regions span residues 307-484 (SSLA…AGPK), 516-535 (VEFD…KPVQ), and 555-602 (MSDS…SFVK). A compositionally biased stretch (pro residues) spans 318–442 (TPPPPLPGNN…IPPPPPPPMA (125 aa)). 2 consecutive WH2 domains span residues 472–489 (DTSD…LRKV) and 499–516 (SRDL…LKKV). Basic and acidic residues predominate over residues 475–484 (DLMREIAGPK). The segment at 537 to 570 (VNKLSGVASILARRVVMEMSDSSGSESDSGNWSD) is central and acidic domains. Low complexity predominate over residues 555–566 (MSDSSGSESDSG). Positions 578–590 (KTLKTKRERRKIL) are enriched in basic residues. The segment covering 591 to 602 (NNRNSQKPSFVK) has biased composition (polar residues).

In terms of assembly, homodimer.

The protein localises to the cell surface. Recruits and activates the Arp2/3 complex, which in turn leads to actin polymerization, promoting Rickettsia motility during infection. The chain is Arp2/3 complex-activating protein rickA (rickA) from Rickettsia montanensis.